Here is a 636-residue protein sequence, read N- to C-terminus: Threonine--tRNA ligase (636 aa).

Positions 1–61 constitute a TGS domain; that stretch reads MPVITLPDGS…TQDVSLSIIT (61 aa). The catalytic stretch occupies residues 242-533; sequence DHRKLGKKFD…LIEEYEGAFP (292 aa). Cys333, His384, and His510 together coordinate Zn(2+).

It belongs to the class-II aminoacyl-tRNA synthetase family. Homodimer. Requires Zn(2+) as cofactor.

It localises to the cytoplasm. It carries out the reaction tRNA(Thr) + L-threonine + ATP = L-threonyl-tRNA(Thr) + AMP + diphosphate + H(+). Its function is as follows. Catalyzes the attachment of threonine to tRNA(Thr) in a two-step reaction: L-threonine is first activated by ATP to form Thr-AMP and then transferred to the acceptor end of tRNA(Thr). Also edits incorrectly charged L-seryl-tRNA(Thr). This Saccharophagus degradans (strain 2-40 / ATCC 43961 / DSM 17024) protein is Threonine--tRNA ligase.